A 545-amino-acid chain; its full sequence is CTP synthase (545 aa).

Positions 1–265 (MTKYIFITGG…DEIVVKKLSL (265 aa)) are amidoligase domain. Residue S13 participates in CTP binding. Position 13 (S13) interacts with UTP. ATP-binding positions include 14–19 (SLGKGI) and D71. D71 and E139 together coordinate Mg(2+). CTP contacts are provided by residues 146 to 148 (DIE), 186 to 191 (KTKPTQ), and K222. UTP is bound by residues 186-191 (KTKPTQ) and K222. The Glutamine amidotransferase type-1 domain maps to 290–541 (KIAMVGKYTE…VLAARIHHQE (252 aa)). G351 is a binding site for L-glutamine. The active-site Nucleophile; for glutamine hydrolysis is the C378. L-glutamine contacts are provided by residues 379 to 382 (LGMQ), E402, and R469. Active-site residues include H514 and E516.

It belongs to the CTP synthase family. Homotetramer.

It catalyses the reaction UTP + L-glutamine + ATP + H2O = CTP + L-glutamate + ADP + phosphate + 2 H(+). The enzyme catalyses L-glutamine + H2O = L-glutamate + NH4(+). The catalysed reaction is UTP + NH4(+) + ATP = CTP + ADP + phosphate + 2 H(+). It functions in the pathway pyrimidine metabolism; CTP biosynthesis via de novo pathway; CTP from UDP: step 2/2. Its activity is regulated as follows. Allosterically activated by GTP, when glutamine is the substrate; GTP has no effect on the reaction when ammonia is the substrate. The allosteric effector GTP functions by stabilizing the protein conformation that binds the tetrahedral intermediate(s) formed during glutamine hydrolysis. Inhibited by the product CTP, via allosteric rather than competitive inhibition. Its function is as follows. Catalyzes the ATP-dependent amination of UTP to CTP with either L-glutamine or ammonia as the source of nitrogen. Regulates intracellular CTP levels through interactions with the four ribonucleotide triphosphates. The polypeptide is CTP synthase (Legionella pneumophila (strain Corby)).